The following is a 378-amino-acid chain: Ribosomal RNA large subunit methyltransferase G (378 aa).

Belongs to the methyltransferase superfamily. RlmG family.

The protein localises to the cytoplasm. It carries out the reaction guanosine(1835) in 23S rRNA + S-adenosyl-L-methionine = N(2)-methylguanosine(1835) in 23S rRNA + S-adenosyl-L-homocysteine + H(+). Functionally, specifically methylates the guanine in position 1835 (m2G1835) of 23S rRNA. The sequence is that of Ribosomal RNA large subunit methyltransferase G from Salmonella gallinarum (strain 287/91 / NCTC 13346).